We begin with the raw amino-acid sequence, 40 residues long: Allophycocyanin alpha-B chain (40 aa).

This sequence belongs to the phycobiliprotein family. Heterodimer of an alpha and a beta chain. In terms of processing, contains one covalently linked bilin chromophore.

Its subcellular location is the cellular thylakoid membrane. Light-harvesting photosynthetic bile pigment-protein from the phycobiliprotein complex. Allophycocyanin has a maximum absorption at approximately 650 nanometers. In Mastigocladus laminosus (Fischerella sp.), this protein is Allophycocyanin alpha-B chain.